We begin with the raw amino-acid sequence, 223 residues long: Killer cell lectin-like receptor subfamily B member 1A (223 aa).

Residues Met1 to Lys43 are Cytoplasmic-facing. The LCK-binding motif motif lies at Cys32–Pro35. A helical; Signal-anchor for type II membrane protein transmembrane segment spans residues Leu44–Val63. Residues Arg64–Ser223 are Extracellular-facing. The region spanning Lys93–Lys212 is the C-type lectin domain. Disulfide bonds link Cys94–Cys105, Cys122–Cys210, and Cys189–Cys202.

As to quaternary structure, homodimer; disulfide-linked. Interacts with tyrosine kinase LCK. Expressed in natural killer cells.

It localises to the membrane. Plays a stimulatory role on natural killer (NK) cell cytotoxicity. This is Killer cell lectin-like receptor subfamily B member 1A (Klrb1a) from Rattus norvegicus (Rat).